A 285-amino-acid polypeptide reads, in one-letter code: Ret finger protein-like 4A (285 aa).

An RING-type; degenerate zinc finger spans residues 11-53 (CYFCFRYLENPVYLNCGYICCFQCLDSLEKSPEGDGVLCPNCS). The B30.2/SPRY domain occupies 78-276 (EPQLNFILTM…ISICPVMNPS (199 aa)).

In terms of assembly, interacts with PSMB1, UBE2A and CCNB1.

The protein localises to the cytoplasm. It is found in the nucleus. In Rattus norvegicus (Rat), this protein is Ret finger protein-like 4A (Rfpl4a).